Reading from the N-terminus, the 299-residue chain is Coenzyme PQQ synthesis protein B (299 aa).

Belongs to the PqqB family.

Its pathway is cofactor biosynthesis; pyrroloquinoline quinone biosynthesis. In terms of biological role, may be involved in the transport of PQQ or its precursor to the periplasm. The chain is Coenzyme PQQ synthesis protein B from Methylorubrum extorquens (strain PA1) (Methylobacterium extorquens).